Consider the following 66-residue polypeptide: Large ribosomal subunit protein bL33c (66 aa).

The protein belongs to the bacterial ribosomal protein bL33 family.

The protein resides in the plastid. It localises to the chloroplast. The protein is Large ribosomal subunit protein bL33c of Solanum bulbocastanum (Wild potato).